A 34-amino-acid polypeptide reads, in one-letter code: Corticostatin-2 (34 aa).

Disulfide bonds link cysteine 3–cysteine 32, cysteine 5–cysteine 21, and cysteine 11–cysteine 31.

Belongs to the alpha-defensin family.

The protein resides in the secreted. Microbicidal activity and inhibits corticotropin (ACTH) stimulated corticosterone production. In Oryctolagus cuniculus (Rabbit), this protein is Corticostatin-2.